We begin with the raw amino-acid sequence, 456 residues long: Taurine--pyruvate aminotransferase (456 aa).

K280 is subject to N6-(pyridoxal phosphate)lysine.

The protein belongs to the class-III pyridoxal-phosphate-dependent aminotransferase family. In terms of assembly, homotetramer. Pyridoxal 5'-phosphate is required as a cofactor.

The enzyme catalyses taurine + pyruvate = sulfoacetaldehyde + L-alanine. The protein operates within organosulfur degradation; alkanesulfonate degradation. Functionally, involved in an anaerobic respiration pathway that converts the sulfonate taurine (2-aminoethanesulfonate) to ammonia, acetate and sulfide. Catalyzes the initial metabolic reaction of anaerobic taurine degradation, i.e. the transamination reaction between taurine and pyruvate leading to sulfoacetaldehyde and alanine. This is Taurine--pyruvate aminotransferase from Bilophila wadsworthia (strain 3_1_6).